The primary structure comprises 1124 residues: Eukaryotic translation initiation factor 3 subunit A (1124 aa).

A coiled-coil region spans residues 96-124; the sequence is LKMAEERTEQAQQQSSQATVDIDDLDNLA. The 182-residue stretch at 317–498 folds into the PCI domain; that stretch reads IQRMTTHVLI…ECVHFGTDLS (182 aa). Composition is skewed to basic and acidic residues over residues 812-851 and 860-883; these read EERR…RQLA and EVER…ERRP. The disordered stretch occupies residues 812–1124; the sequence is EERRRIEEEL…EEGWTDVKHR (313 aa). Positions 900 to 910 are enriched in low complexity; sequence PAAAAPANPAA. 4 stretches are compositionally biased toward basic and acidic residues: residues 928–952, 960–990, 1007–1048, and 1063–1100; these read PRER…EKDG, RGGD…DRGP, PRRD…RGGG, and DDNR…EARP.

The protein belongs to the eIF-3 subunit A family. In terms of assembly, component of the eukaryotic translation initiation factor 3 (eIF-3) complex.

It is found in the cytoplasm. RNA-binding component of the eukaryotic translation initiation factor 3 (eIF-3) complex, which is involved in protein synthesis of a specialized repertoire of mRNAs and, together with other initiation factors, stimulates binding of mRNA and methionyl-tRNAi to the 40S ribosome. The eIF-3 complex specifically targets and initiates translation of a subset of mRNAs involved in cell proliferation. The protein is Eukaryotic translation initiation factor 3 subunit A of Anopheles gambiae (African malaria mosquito).